A 502-amino-acid polypeptide reads, in one-letter code: Glycerol kinase (502 aa).

T14 is a binding site for ADP. The ATP site is built by T14, T15, and S16. T14 lines the sn-glycerol 3-phosphate pocket. R18 contributes to the ADP binding site. The sn-glycerol 3-phosphate site is built by R84, E85, and Y136. Glycerol is bound by residues R84, E85, and Y136. The residue at position 232 (H232) is a Phosphohistidine; by HPr. D246 contacts sn-glycerol 3-phosphate. The glycerol site is built by D246 and Q247. ADP contacts are provided by T268 and G311. ATP is bound by residues T268, G311, Q315, and G412. Residues G412 and N416 each coordinate ADP.

The protein belongs to the FGGY kinase family. In terms of assembly, homotetramer and homodimer (in equilibrium). In terms of processing, the phosphoenolpyruvate-dependent sugar phosphotransferase system (PTS), including enzyme I, and histidine-containing protein (HPr) are required for the phosphorylation, which leads to the activation of the enzyme.

It catalyses the reaction glycerol + ATP = sn-glycerol 3-phosphate + ADP + H(+). It participates in polyol metabolism; glycerol degradation via glycerol kinase pathway; sn-glycerol 3-phosphate from glycerol: step 1/1. Activated by phosphorylation and inhibited by fructose 1,6-bisphosphate (FBP). Functionally, key enzyme in the regulation of glycerol uptake and metabolism. Catalyzes the phosphorylation of glycerol to yield sn-glycerol 3-phosphate. The protein is Glycerol kinase of Streptococcus pneumoniae (strain Hungary19A-6).